A 313-amino-acid polypeptide reads, in one-letter code: Heterogeneous nuclear ribonucleoproteins C1/C2 (313 aa).

An N-acetylalanine modification is found at alanine 2. Glycyl lysine isopeptide (Lys-Gly) (interchain with G-Cter in SUMO2) cross-links involve residues lysine 8, lysine 50, lysine 89, and lysine 94. Positions 16–87 (SRVFIGNLNT…QVLDINLAAE (72 aa)) constitute an RRM domain. Serine 113, serine 115, and serine 121 each carry phosphoserine. Disordered regions lie at residues 139 to 191 (YPAR…KLKG) and 219 to 313 (EKEQ…EDDS). A Nuclear localization signal motif is present at residues 155–161 (PSKRQRV). Phosphoserine is present on residues serine 162 and serine 166. Residues 175–186 (SKSGQRGSSSKS) show a composition bias toward low complexity. Lysine 176 carries the post-translational modification N6-acetyllysine; alternate. Lysine 176 participates in a covalent cross-link: Glycyl lysine isopeptide (Lys-Gly) (interchain with G-Cter in SUMO2); alternate. Residues 191-226 (GDDLQAIKKELTQIKQKVDSLLESLEKIEKEQSKQA) are a coiled coil. Residue lysine 224 forms a Glycyl lysine isopeptide (Lys-Gly) (interchain with G-Cter in SUMO2) linkage. A phosphoserine mark is found at serine 229, serine 231, and serine 232. Lysine 237 participates in a covalent cross-link: Glycyl lysine isopeptide (Lys-Gly) (interchain with G-Cter in SUMO2). Residue lysine 240 forms a Glycyl lysine isopeptide (Lys-Gly) (interchain with G-Cter in SUMO2); alternate linkage. Lysine 240 participates in a covalent cross-link: Glycyl lysine isopeptide (Lys-Gly) (interchain with G-Cter in SUMO1); alternate. 4 positions are modified to phosphoserine: serine 241, serine 246, serine 247, and serine 249. A compositionally biased stretch (basic and acidic residues) spans 250–261 (VKKDETNVKMES). Residues lysine 251 and lysine 252 each participate in a glycyl lysine isopeptide (Lys-Gly) (interchain with G-Cter in SUMO2) cross-link. Lysine 258 participates in a covalent cross-link: Glycyl lysine isopeptide (Lys-Gly) (interchain with G-Cter in SUMO2); alternate. Residue lysine 258 forms a Glycyl lysine isopeptide (Lys-Gly) (interchain with G-Cter in SUMO); alternate linkage. Phosphoserine occurs at positions 261 and 268. The span at 263–284 (AGADDSAEEGDLLDDDDNEDRG) shows a compositional bias: acidic residues. Over residues 285 to 294 (DDQLELKDDE) the composition is skewed to basic and acidic residues. The segment covering 295–313 (KEPEEGEDDRDSANGEDDS) has biased composition (acidic residues). 2 positions are modified to phosphoserine: serine 306 and serine 313.

This sequence belongs to the RRM HNRPC family. RALY subfamily. In terms of assembly, tetramer composed of 3 copies of isoform C1 and 1 copy of isoform C2. Assembly of 3 tetramers with bound pre-mRNA gives rise to a 19S complex that interacts with HNRNPA2B1 tetramers. Component of the 40S hnRNP particle. Identified in the spliceosome C complex. Interacts with IGF2BP1. Interacts with DHX9; this interaction is direct, enhanced probably by their concomitant binding to RNA and mediates the attachment to actin filaments. Interacts with PPIA/CYPA. In terms of processing, phosphorylated on Ser-268 and Ser-306 in resting cells. Post-translationally, sumoylated. Sumoylation reduces affinity for mRNA. Ubiquitinated and degraded after nucleo-cytoplasmic transport by YWHAE.

It is found in the nucleus. Functionally, binds pre-mRNA and nucleates the assembly of 40S hnRNP particles. Interacts with poly-U tracts in the 3'-UTR or 5'-UTR of mRNA and modulates the stability and the level of translation of bound mRNA molecules. Single HNRNPC tetramers bind 230-240 nucleotides. Trimers of HNRNPC tetramers bind 700 nucleotides. May play a role in the early steps of spliceosome assembly and pre-mRNA splicing. N6-methyladenosine (m6A) has been shown to alter the local structure in mRNAs and long non-coding RNAs (lncRNAs) via a mechanism named 'm(6)A-switch', facilitating binding of HNRNPC, leading to regulation of mRNA splicing. This chain is Heterogeneous nuclear ribonucleoproteins C1/C2 (Hnrnpc), found in Mus musculus (Mouse).